The primary structure comprises 206 residues: Hypoxanthine-guanine phosphoribosyltransferase (206 aa).

Residues 110 to 118 (DEVDDTRTT), K154, and 181 to 187 (WIMYPWE) each bind GMP. Catalysis depends on D114, which acts as the Proton acceptor.

This sequence belongs to the purine/pyrimidine phosphoribosyltransferase family. In terms of assembly, dimer. It depends on Mg(2+) as a cofactor.

It localises to the endoplasmic reticulum. The enzyme catalyses IMP + diphosphate = hypoxanthine + 5-phospho-alpha-D-ribose 1-diphosphate. It carries out the reaction GMP + diphosphate = guanine + 5-phospho-alpha-D-ribose 1-diphosphate. In terms of biological role, converts guanine to guanosine monophosphate, and hypoxanthine to inosine monophosphate. Transfers the 5-phosphoribosyl group from 5-phosphoribosylpyrophosphate onto the purine. Plays a central role in the generation of purine nucleotides through the purine salvage pathway. The protein is Hypoxanthine-guanine phosphoribosyltransferase (hpt1) of Schizosaccharomyces pombe (strain 972 / ATCC 24843) (Fission yeast).